We begin with the raw amino-acid sequence, 494 residues long: tRNA-2-methylthio-N(6)-dimethylallyladenosine synthase (494 aa).

Residues 12–131 (PTYRVVTYGC…LPVLLKRARH (120 aa)) enclose the MTTase N-terminal domain. Positions 21, 60, 94, 168, 172, and 175 each coordinate [4Fe-4S] cluster. A Radical SAM core domain is found at 154 to 385 (RDSAYSAWVS…ELVDDIAWQE (232 aa)). A TRAM domain is found at 387-457 (KAQVGRAVEV…PHHLVADGGL (71 aa)).

Belongs to the methylthiotransferase family. MiaB subfamily. In terms of assembly, monomer. [4Fe-4S] cluster is required as a cofactor.

Its subcellular location is the cytoplasm. It catalyses the reaction N(6)-dimethylallyladenosine(37) in tRNA + (sulfur carrier)-SH + AH2 + 2 S-adenosyl-L-methionine = 2-methylsulfanyl-N(6)-dimethylallyladenosine(37) in tRNA + (sulfur carrier)-H + 5'-deoxyadenosine + L-methionine + A + S-adenosyl-L-homocysteine + 2 H(+). Functionally, catalyzes the methylthiolation of N6-(dimethylallyl)adenosine (i(6)A), leading to the formation of 2-methylthio-N6-(dimethylallyl)adenosine (ms(2)i(6)A) at position 37 in tRNAs that read codons beginning with uridine. This chain is tRNA-2-methylthio-N(6)-dimethylallyladenosine synthase, found in Cutibacterium acnes (strain DSM 16379 / KPA171202) (Propionibacterium acnes).